A 336-amino-acid chain; its full sequence is Heme A synthase (336 aa).

A run of 8 helical transmembrane segments spans residues 12–32, 97–117, 130–150, 161–181, 194–214, 256–276, 285–305, and 310–330; these read LKLW…VGGL, LLAR…TLYF, IFFL…SGLI, SIHL…ILDI, LFLL…AFLS, FLHR…NFIY, YVLF…ITLI, and ITYA…YFLI. Position 258 (histidine 258) interacts with heme. Residue histidine 316 coordinates heme.

The protein belongs to the COX15/CtaA family. Type 2 subfamily. Interacts with CtaB. Requires heme b as cofactor.

The protein localises to the cell membrane. The enzyme catalyses Fe(II)-heme o + 2 A + H2O = Fe(II)-heme a + 2 AH2. The protein operates within porphyrin-containing compound metabolism; heme A biosynthesis; heme A from heme O: step 1/1. In terms of biological role, catalyzes the conversion of heme O to heme A by two successive hydroxylations of the methyl group at C8. The first hydroxylation forms heme I, the second hydroxylation results in an unstable dihydroxymethyl group, which spontaneously dehydrates, resulting in the formyl group of heme A. The sequence is that of Heme A synthase from Pelagibacter ubique (strain HTCC1062).